A 286-amino-acid polypeptide reads, in one-letter code: Pantothenate synthetase (286 aa).

30–37 (MGNLHEGH) contributes to the ATP binding site. The active-site Proton donor is the histidine 37. Residue glutamine 61 participates in (R)-pantoate binding. Position 61 (glutamine 61) interacts with beta-alanine. 149 to 152 (GRKD) contributes to the ATP binding site. Glutamine 155 contributes to the (R)-pantoate binding site. Residues valine 178 and 186–189 (MSSR) contribute to the ATP site.

The protein belongs to the pantothenate synthetase family. As to quaternary structure, homodimer.

The protein resides in the cytoplasm. It catalyses the reaction (R)-pantoate + beta-alanine + ATP = (R)-pantothenate + AMP + diphosphate + H(+). It functions in the pathway cofactor biosynthesis; (R)-pantothenate biosynthesis; (R)-pantothenate from (R)-pantoate and beta-alanine: step 1/1. In terms of biological role, catalyzes the condensation of pantoate with beta-alanine in an ATP-dependent reaction via a pantoyl-adenylate intermediate. This is Pantothenate synthetase from Alkalilimnicola ehrlichii (strain ATCC BAA-1101 / DSM 17681 / MLHE-1).